Reading from the N-terminus, the 312-residue chain is NAD(P)(+)--arginine ADP-ribosyltransferase 2 (312 aa).

Positions methionine 1–alanine 20 are cleaved as a signal peptide. The propeptide occupies alanine 21 to glycine 31. Intrachain disulfides connect cysteine 51–cysteine 260 and cysteine 159–cysteine 208. One can recognise a TR mART core domain in the interval tyrosine 71 to serine 256. Positions 108, 164, and 183 each coordinate NAD(+). Arginine 164 is a catalytic residue. Residue serine 186 is part of the active site. NAD(+) is bound at residue serine 217. Glutamate 224 is a catalytic residue. The propeptide occupies glycine 267 to valine 312.

It belongs to the Arg-specific ADP-ribosyltransferase family.

It is found in the secreted. The protein localises to the extracellular space. The enzyme catalyses L-arginyl-[protein] + NAD(+) = N(omega)-(ADP-D-ribosyl)-L-arginyl-[protein] + nicotinamide + H(+). This is NAD(P)(+)--arginine ADP-ribosyltransferase 2 from Gallus gallus (Chicken).